Consider the following 326-residue polypeptide: DNA-directed RNA polymerase subunit alpha (326 aa).

The segment at 1–232 is alpha N-terminal domain (alpha-NTD); it reads MQGSARDFLK…EQLSSFVELE (232 aa). An alpha C-terminal domain (alpha-CTD) region spans residues 246–326; the sequence is FDPQLLAAVD…NWPPVDLMSE (81 aa).

It belongs to the RNA polymerase alpha chain family. In terms of assembly, homodimer. The RNAP catalytic core consists of 2 alpha, 1 beta, 1 beta' and 1 omega subunit. When a sigma factor is associated with the core the holoenzyme is formed, which can initiate transcription.

It catalyses the reaction RNA(n) + a ribonucleoside 5'-triphosphate = RNA(n+1) + diphosphate. Functionally, DNA-dependent RNA polymerase catalyzes the transcription of DNA into RNA using the four ribonucleoside triphosphates as substrates. The polypeptide is DNA-directed RNA polymerase subunit alpha (Vesicomyosocius okutanii subsp. Calyptogena okutanii (strain HA)).